The sequence spans 217 residues: Octanoyltransferase (217 aa).

A BPL/LPL catalytic domain is found at 32–207 (DDSADEIWLV…HMIKKLNATQ (176 aa)). Substrate-binding positions include 71–78 (RGGQVTYH), 138–140 (SLG), and 151–153 (GLA). Cys-169 (acyl-thioester intermediate) is an active-site residue.

Belongs to the LipB family.

Its subcellular location is the cytoplasm. The enzyme catalyses octanoyl-[ACP] + L-lysyl-[protein] = N(6)-octanoyl-L-lysyl-[protein] + holo-[ACP] + H(+). The protein operates within protein modification; protein lipoylation via endogenous pathway; protein N(6)-(lipoyl)lysine from octanoyl-[acyl-carrier-protein]: step 1/2. Its function is as follows. Catalyzes the transfer of endogenously produced octanoic acid from octanoyl-acyl-carrier-protein onto the lipoyl domains of lipoate-dependent enzymes. Lipoyl-ACP can also act as a substrate although octanoyl-ACP is likely to be the physiological substrate. The sequence is that of Octanoyltransferase from Pseudoalteromonas translucida (strain TAC 125).